Consider the following 988-residue polypeptide: DNA-binding protein SMUBP-2 (988 aa).

Ala-2 carries the N-acetylalanine modification. ATP-binding positions include 213–220 (GPPGTGKT), Gln-402, Tyr-441, and Glu-570. The SS DNA-binding stretch occupies residues 637–783 (TAFEYLDDIV…KARHITVSRR (147 aa)). Disordered regions lie at residues 651 to 722 (THEG…GGTD), 765 to 820 (LKHD…PHGS), and 835 to 872 (RQQG…ALPS). Residues 702 to 718 (SQVQPQHSSKANGSDRT) are compositionally biased toward polar residues. Residues 721 to 784 (TDRTEHFRAM…ARHITVSRRS (64 aa)) form the R3H domain. Basic and acidic residues predominate over residues 765–775 (LKHDSTGEGKA). Phosphoserine occurs at positions 797 and 800. Over residues 802–817 (AQAEPEPQVEQPVGQP) the composition is skewed to low complexity. The segment covering 835–844 (RQQGCQAQSQ) has biased composition (polar residues). Residues 857–861 (KKKKK) carry the Nuclear localization signal motif. An AN1-type zinc finger spans residues 884–933 (VKADNTCSFTKCSASTTTLGQFCMHCSRRYCLSHHLPEIHGCGEKARAHA). Residues Cys-890, Cys-895, Cys-906, Cys-909, Cys-914, His-917, His-923, and Cys-925 each contribute to the Zn(2+) site. The segment at 943-988 (LYAGSGTKDRALDPAKRAQLQRKLDKKLGELSSQRTSKKKEKERGT) is disordered. Residues 949–971 (TKDRALDPAKRAQLQRKLDKKLG) are compositionally biased toward basic and acidic residues. Positions 957 to 986 (AKRAQLQRKLDKKLGELSSQRTSKKKEKER) form a coiled coil.

Belongs to the DNA2/NAM7 helicase family. Homooligomer. Interacts with RUVBL1. Interacts with RUVBL2. Interacts with GTF3C1. Interacts with ABT1. Interacts with ribosomes. Expressed in liver, skin, muscle, heart, brain, spleen and kidney.

It is found in the nucleus. Its subcellular location is the cytoplasm. The protein resides in the cell projection. The protein localises to the axon. It carries out the reaction ATP + H2O = ADP + phosphate + H(+). Functionally, 5' to 3' helicase that unwinds RNA and DNA duplexes in an ATP-dependent reaction. Specific to 5'-phosphorylated single-stranded guanine-rich sequences. May play a role in RNA metabolism, ribosome biogenesis or initiation of translation. May play a role in regulation of transcription. Interacts with tRNA-Tyr. The sequence is that of DNA-binding protein SMUBP-2 (Ighmbp2) from Rattus norvegicus (Rat).